Reading from the N-terminus, the 149-residue chain is Ribonuclease pancreatic (149 aa).

Positions Met1–Gly25 are cleaved as a signal peptide. The substrate site is built by Lys32 and Arg35. The active-site Proton acceptor is His37. 4 disulfide bridges follow: Cys51-Cys109, Cys65-Cys120, Cys83-Cys135, and Cys90-Cys97. Residue Lys66–Thr70 coordinates substrate. Asn87 carries N-linked (GlcNAc...) asparagine glycosylation. Positions 91 and 110 each coordinate substrate. His144 (proton donor) is an active-site residue.

This sequence belongs to the pancreatic ribonuclease family. Monomer. Interacts with and forms tight 1:1 complexes with RNH1. Dimerization of two such complexes may occur. Interaction with RNH1 inhibits this protein. Pancreas.

It is found in the secreted. It catalyses the reaction an [RNA] containing cytidine + H2O = an [RNA]-3'-cytidine-3'-phosphate + a 5'-hydroxy-ribonucleotide-3'-[RNA].. It carries out the reaction an [RNA] containing uridine + H2O = an [RNA]-3'-uridine-3'-phosphate + a 5'-hydroxy-ribonucleotide-3'-[RNA].. Its function is as follows. Endonuclease that catalyzes the cleavage of RNA on the 3' side of pyrimidine nucleotides. Acts on single-stranded and double-stranded RNA. This Acomys cahirinus (Cairo spiny mouse) protein is Ribonuclease pancreatic (RNASE1).